Here is a 625-residue protein sequence, read N- to C-terminus: 1-deoxy-D-xylulose-5-phosphate synthase (625 aa).

Thiamine diphosphate contacts are provided by residues His-80 and 121–123 (GHS). Asp-152 contacts Mg(2+). Thiamine diphosphate contacts are provided by residues 153-154 (GA), Asn-181, Tyr-288, and Glu-370. Asn-181 is a Mg(2+) binding site.

Belongs to the transketolase family. DXPS subfamily. In terms of assembly, homodimer. Requires Mg(2+) as cofactor. Thiamine diphosphate serves as cofactor.

The enzyme catalyses D-glyceraldehyde 3-phosphate + pyruvate + H(+) = 1-deoxy-D-xylulose 5-phosphate + CO2. It participates in metabolic intermediate biosynthesis; 1-deoxy-D-xylulose 5-phosphate biosynthesis; 1-deoxy-D-xylulose 5-phosphate from D-glyceraldehyde 3-phosphate and pyruvate: step 1/1. Its function is as follows. Catalyzes the acyloin condensation reaction between C atoms 2 and 3 of pyruvate and glyceraldehyde 3-phosphate to yield 1-deoxy-D-xylulose-5-phosphate (DXP). The protein is 1-deoxy-D-xylulose-5-phosphate synthase of Alteromonas mediterranea (strain DSM 17117 / CIP 110805 / LMG 28347 / Deep ecotype).